Reading from the N-terminus, the 158-residue chain is 2-C-methyl-D-erythritol 2,4-cyclodiphosphate synthase (158 aa).

Positions 10 and 12 each coordinate a divalent metal cation. 4-CDP-2-C-methyl-D-erythritol 2-phosphate is bound by residues 10-12 and 36-37; these read DVH and HS. Position 44 (histidine 44) interacts with a divalent metal cation. Residues 58-60, 63-67, and arginine 144 contribute to the 4-CDP-2-C-methyl-D-erythritol 2-phosphate site; these read DIG and FSDTD.

It belongs to the IspF family. As to quaternary structure, homotrimer. It depends on a divalent metal cation as a cofactor.

It catalyses the reaction 4-CDP-2-C-methyl-D-erythritol 2-phosphate = 2-C-methyl-D-erythritol 2,4-cyclic diphosphate + CMP. The protein operates within isoprenoid biosynthesis; isopentenyl diphosphate biosynthesis via DXP pathway; isopentenyl diphosphate from 1-deoxy-D-xylulose 5-phosphate: step 4/6. Functionally, involved in the biosynthesis of isopentenyl diphosphate (IPP) and dimethylallyl diphosphate (DMAPP), two major building blocks of isoprenoid compounds. Catalyzes the conversion of 4-diphosphocytidyl-2-C-methyl-D-erythritol 2-phosphate (CDP-ME2P) to 2-C-methyl-D-erythritol 2,4-cyclodiphosphate (ME-CPP) with a corresponding release of cytidine 5-monophosphate (CMP). In Burkholderia vietnamiensis (strain G4 / LMG 22486) (Burkholderia cepacia (strain R1808)), this protein is 2-C-methyl-D-erythritol 2,4-cyclodiphosphate synthase.